We begin with the raw amino-acid sequence, 318 residues long: Protein W (318 aa).

Disordered stretches follow at residues 1 to 23 (MDQD…GGRE) and 38 to 318 (SEPT…KKGA). Basic and acidic residues predominate over residues 7–20 (ILKEDSEVEREAPG). Over residues 50–59 (LHNTINTPQG) the composition is skewed to polar residues. The residue at position 68 (Ser68) is a Phosphoserine; by host. Positions 83–101 (RSGEESRVSGRTSKPEAEA) are enriched in basic and acidic residues. Ser125 carries the post-translational modification Phosphoserine; by host. Positions 150–168 (GIEDENREMAAHPDKRGED) are enriched in basic and acidic residues. Polar residues predominate over residues 191–206 (ASNNGRSMEPGSSHSA). A phosphoserine; by host mark is found at Ser192, Ser249, Ser257, and Ser260.

The sequence is that of Protein W (P/V/C) from Sendai virus (strain Fushimi) (SeV).